We begin with the raw amino-acid sequence, 292 residues long: Ribosomal protein L11 methyltransferase (292 aa).

S-adenosyl-L-methionine contacts are provided by T144, G165, D187, and N229.

It belongs to the methyltransferase superfamily. PrmA family.

The protein localises to the cytoplasm. The catalysed reaction is L-lysyl-[protein] + 3 S-adenosyl-L-methionine = N(6),N(6),N(6)-trimethyl-L-lysyl-[protein] + 3 S-adenosyl-L-homocysteine + 3 H(+). Functionally, methylates ribosomal protein L11. The polypeptide is Ribosomal protein L11 methyltransferase (Pseudomonas putida (strain ATCC 700007 / DSM 6899 / JCM 31910 / BCRC 17059 / LMG 24140 / F1)).